A 278-amino-acid chain; its full sequence is MTVLHSVDFFPSGKAPVAIEPRLPQAAFPEHHHDFHEIVIVEHGTGIHVFNGQPYTISGGTVCFVRDHDRHLYEHTDNLCLTNVLWRSPDAFQFLAGLDQLLPQEQDGYYPSHWRVNQSVLQQVRQLVGLMEHAGDGMDAPAVANREILFMQLLVLLRRSSLMEGATNNDAKLNQLMAWLEDHFAEEVCWEAVAEQFSLSLRTLHRQLKQHTGLTPQRYLNRLRLIKARHLLRHSDHSVTEIAYRCGFGDSNHFSTLFRREFNWSPRDIRQGRDAIIQ.

One can recognise an HTH araC/xylS-type domain in the interval 174–272 (NQLMAWLEDH…NWSPRDIRQG (99 aa)). DNA-binding regions (H-T-H motif) lie at residues 191–212 (EAVA…KQHT) and 239–262 (VTEI…RREF).

As to quaternary structure, binds DNA as a dimer.

Its subcellular location is the cytoplasm. Functionally, activates expression of the rhaBAD and rhaT operons. The chain is HTH-type transcriptional activator RhaS from Salmonella paratyphi A (strain ATCC 9150 / SARB42).